We begin with the raw amino-acid sequence, 81 residues long: uncharacterized protein (81 aa).

The signal sequence occupies residues 1-24; the sequence is MRKILKIVSLLILLLLLVYSFFSP. At 25 to 28 the chain is on the extracellular side; the sequence is NSQL. Residues 29-49 form a helical membrane-spanning segment; the sequence is FVFVQLIIIAFLIGFGINCFV. The Cytoplasmic portion of the chain corresponds to 50-81; the sequence is KKERYQGTLYFVIAICNITINLDKINELIQSI.

Its subcellular location is the cell membrane. This is an uncharacterized protein from Bacillus subtilis (strain 168).